A 155-amino-acid chain; its full sequence is MDKECKSNLESLLQGVAKEFNLKIHSLDILTNQNPIIVKIIICKTNKDDITLDDCSRFNNPAISVIENSNLLNCSYVLEISSQGVSDELTSERDFKTFKGFPVNVELNQKNSQIKFLNGLLYEKSKDYLAINIKGKIKKIPFNEVLKVSLCTFKD.

Belongs to the RimP family.

The protein resides in the cytoplasm. In terms of biological role, required for maturation of 30S ribosomal subunits. The polypeptide is Ribosome maturation factor RimP (Prochlorococcus marinus subsp. pastoris (strain CCMP1986 / NIES-2087 / MED4)).